Here is a 116-residue protein sequence, read N- to C-terminus: MRGLSTKPVAIIIAILTVHFLFAAVTSQSSGDFVPIESKCNGTIAECSLSTAEEEFEMDSEINRRILATTKYISYGALRRNTVPCSRRGASYYNCRRGAQANPYSRGCSAITRCRR.

The signal sequence occupies residues 1 to 23 (MRGLSTKPVAIIIAILTVHFLFA). Positions 24–67 (AVTSQSSGDFVPIESKCNGTIAECSLSTAEEEFEMDSEINRRIL) are cleaved as a propeptide — removed in mature form. Asn41 carries an N-linked (GlcNAc...) asparagine glycan. Cystine bridges form between Cys85–Cys95 and Cys108–Cys114.

It belongs to the plant rapid alkalinization factor (RALF) family. Proteolytically cleaved, probably by S1P, a subtilisin-like serine protease (subtilase). As to expression, expressed in roots, stems, leaves and plants.

The protein localises to the secreted. In terms of biological role, cell signaling peptide that may regulate plant stress, growth, and development. Mediates a rapid alkalinization of extracellular space by mediating a transient increase in the cytoplasmic Ca(2+) concentration leading to a calcium-dependent signaling events through a cell surface receptor and a concomitant activation of some intracellular mitogen-activated protein kinases. The chain is Protein RALF-like 33 (RALFL33) from Arabidopsis thaliana (Mouse-ear cress).